Consider the following 509-residue polypeptide: Steroid 17-alpha-hydroxylase/17,20 lyase (509 aa).

Asn-202 lines the substrate pocket. Cys-442 contacts heme.

The protein belongs to the cytochrome P450 family. It depends on heme as a cofactor.

The protein resides in the endoplasmic reticulum membrane. Its subcellular location is the microsome membrane. The enzyme catalyses a C21-steroid + reduced [NADPH--hemoprotein reductase] + O2 = a 17alpha-hydroxy-C21-steroid + oxidized [NADPH--hemoprotein reductase] + H2O + H(+). It carries out the reaction progesterone + reduced [NADPH--hemoprotein reductase] + O2 = 17alpha-hydroxyprogesterone + oxidized [NADPH--hemoprotein reductase] + H2O + H(+). The catalysed reaction is pregnenolone + reduced [NADPH--hemoprotein reductase] + O2 = 17alpha-hydroxypregnenolone + oxidized [NADPH--hemoprotein reductase] + H2O + H(+). It catalyses the reaction 17alpha-hydroxyprogesterone + reduced [NADPH--hemoprotein reductase] + O2 = androst-4-ene-3,17-dione + acetate + oxidized [NADPH--hemoprotein reductase] + H2O + 2 H(+). The enzyme catalyses 17alpha-hydroxyprogesterone + reduced [NADPH--hemoprotein reductase] + O2 = 16alpha,17alpha-dihydroxyprogesterone + oxidized [NADPH--hemoprotein reductase] + H2O + H(+). It carries out the reaction 16alpha,17alpha-dihydroxyprogesterone + reduced [NADPH--hemoprotein reductase] + O2 = 6beta,16alpha,17alpha-trihydroxyprogesterone + oxidized [NADPH--hemoprotein reductase] + H2O + H(+). The catalysed reaction is 17alpha-hydroxypregnenolone + reduced [NADPH--hemoprotein reductase] + O2 = 3beta-hydroxyandrost-5-en-17-one + acetate + oxidized [NADPH--hemoprotein reductase] + H2O + 2 H(+). It catalyses the reaction 16alpha,17alpha-dihydroxypregnenolone + reduced [NADPH--hemoprotein reductase] + O2 = 3beta,16alpha-dihydroxy-androst-5-en-17-one + acetate + oxidized [NADPH--hemoprotein reductase] + H2O + 2 H(+). The enzyme catalyses 3beta-hydroxyandrost-5-en-17-one + reduced [NADPH--hemoprotein reductase] + O2 = 3beta,16alpha-dihydroxy-androst-5-en-17-one + oxidized [NADPH--hemoprotein reductase] + H2O + H(+). It carries out the reaction androst-4-ene-3,17-dione + reduced [NADPH--hemoprotein reductase] + O2 = 16alpha-hydroxyandrost-4-ene-3,17-dione + oxidized [NADPH--hemoprotein reductase] + H2O + H(+). It functions in the pathway steroid hormone biosynthesis. The protein operates within steroid biosynthesis; glucocorticoid biosynthesis. With respect to regulation, regulated predominantly by intracellular cAMP levels. The 17,20-lyase activity is stimulated by cytochrome b5, which acts as an allosteric effector increasing the Vmax of the lyase activity. In terms of biological role, a cytochrome P450 monooxygenase involved in corticoid and androgen biosynthesis. Catalyzes 17-alpha hydroxylation of C21 steroids, which is common for both pathways. A second oxidative step, required only for androgen synthesis, involves an acyl-carbon cleavage. The 17-alpha hydroxy intermediates, as part of adrenal glucocorticoids biosynthesis pathway, are precursors of cortisol. Hydroxylates steroid hormones, pregnenolone and progesterone to form 17-alpha hydroxy metabolites, followed by the cleavage of the C17-C20 bond to form C19 steroids, dehydroepiandrosterone (DHEA) and androstenedione. Has 16-alpha hydroxylase activity. Catalyzes 16-alpha hydroxylation of 17-alpha hydroxy pregnenolone, followed by the cleavage of the C17-C20 bond to form 16-alpha-hydroxy DHEA. Also 16-alpha hydroxylates androgens, relevant for estriol synthesis. Mechanistically, uses molecular oxygen inserting one oxygen atom into a substrate, and reducing the second into a water molecule, with two electrons provided by NADPH via cytochrome P450 reductase (CPR; NADPH-ferrihemoprotein reductase). The sequence is that of Steroid 17-alpha-hydroxylase/17,20 lyase (CYP17A1) from Sus scrofa (Pig).